We begin with the raw amino-acid sequence, 445 residues long: 3-phosphoshikimate 1-carboxyvinyltransferase (445 aa).

The segment at 1 to 24 (MEHAATLPQTSRRPATPLTGTITV) is disordered. The span at 7 to 22 (LPQTSRRPATPLTGTI) shows a compositional bias: polar residues. Positions 28, 29, and 33 each coordinate 3-phosphoshikimate. K28 contacts phosphoenolpyruvate. 2 residues coordinate phosphoenolpyruvate: G101 and R129. Positions 174, 176, 326, and 353 each coordinate 3-phosphoshikimate. Q176 provides a ligand contact to phosphoenolpyruvate. Residue D326 is the Proton acceptor of the active site. R357 and R399 together coordinate phosphoenolpyruvate.

The protein belongs to the EPSP synthase family. Monomer.

Its subcellular location is the cytoplasm. It carries out the reaction 3-phosphoshikimate + phosphoenolpyruvate = 5-O-(1-carboxyvinyl)-3-phosphoshikimate + phosphate. It participates in metabolic intermediate biosynthesis; chorismate biosynthesis; chorismate from D-erythrose 4-phosphate and phosphoenolpyruvate: step 6/7. Functionally, catalyzes the transfer of the enolpyruvyl moiety of phosphoenolpyruvate (PEP) to the 5-hydroxyl of shikimate-3-phosphate (S3P) to produce enolpyruvyl shikimate-3-phosphate and inorganic phosphate. The sequence is that of 3-phosphoshikimate 1-carboxyvinyltransferase from Acidiphilium cryptum (strain JF-5).